A 418-amino-acid chain; its full sequence is AP-3 complex subunit mu-2 (418 aa).

In terms of domain architecture, MHD spans 176–417; it reads NNEAYFDVVE…MTKAGKFQVR (242 aa).

It belongs to the adaptor complexes medium subunit family. As to quaternary structure, adaptor protein complex 3 (AP-3) is a heterotetramer composed of two large adaptins (delta-type subunit AP3D1 and beta-type subunit AP3B1 or AP3B2), a medium adaptin (mu-type subunit AP3M1 or AP3M2) and a small adaptin (sigma-type subunit APS1 or AP3S2). AP-3 associates with the BLOC-1 complex.

The protein resides in the golgi apparatus. Its subcellular location is the cytoplasmic vesicle membrane. Its function is as follows. Component of the adaptor complexes which link clathrin to receptors in coated vesicles. Clathrin-associated protein complexes are believed to interact with the cytoplasmic tails of membrane proteins, leading to their selection and concentration. Ap47 is a subunit of the plasma membrane adaptor. In concert with the BLOC-1 complex, AP-3 is required to target cargos into vesicles assembled at cell bodies for delivery into neurites and nerve terminals. This Rattus norvegicus (Rat) protein is AP-3 complex subunit mu-2 (Ap3m2).